A 406-amino-acid chain; its full sequence is Nicotinate phosphoribosyltransferase (406 aa).

H227 bears the Phosphohistidine; by autocatalysis mark.

This sequence belongs to the NAPRTase family. Transiently phosphorylated on a His residue during the reaction cycle. Phosphorylation strongly increases the affinity for substrates and increases the rate of nicotinate D-ribonucleotide production. Dephosphorylation regenerates the low-affinity form of the enzyme, leading to product release.

It carries out the reaction nicotinate + 5-phospho-alpha-D-ribose 1-diphosphate + ATP + H2O = nicotinate beta-D-ribonucleotide + ADP + phosphate + diphosphate. Its pathway is cofactor biosynthesis; NAD(+) biosynthesis; nicotinate D-ribonucleotide from nicotinate: step 1/1. Catalyzes the synthesis of beta-nicotinate D-ribonucleotide from nicotinate and 5-phospho-D-ribose 1-phosphate at the expense of ATP. This is Nicotinate phosphoribosyltransferase from Methanosarcina mazei (strain ATCC BAA-159 / DSM 3647 / Goe1 / Go1 / JCM 11833 / OCM 88) (Methanosarcina frisia).